Consider the following 648-residue polypeptide: Serine/threonine-protein kinase plk-1 (648 aa).

Residues 1-24 (MNRLPNIAKPPQKSNQRKEKAPPE) are disordered. The Protein kinase domain occupies 38–289 (YEKGRFLGKG…AKQVQRDGFF (252 aa)). Residues 44–52 (LGKGGFAHC) and lysine 67 contribute to the ATP site. Aspartate 161 serves as the catalytic Proton acceptor. POLO box domains follow at residues 412 to 492 (WISK…YMND) and 514 to 596 (TLRV…RLMS). The span at 612 to 629 (PRSMAAARSASAGSRGPN) shows a compositional bias: low complexity.

It belongs to the protein kinase superfamily. Ser/Thr protein kinase family. CDC5/Polo subfamily. Interacts with mex-5, mex-6 and spat-1. Embryos.

The protein localises to the cytoplasm. Its subcellular location is the cytoskeleton. It is found in the microtubule organizing center. The protein resides in the centrosome. It localises to the midbody. The protein localises to the nucleus. Its subcellular location is the chromosome. It is found in the centromere. The protein resides in the kinetochore. It catalyses the reaction L-seryl-[protein] + ATP = O-phospho-L-seryl-[protein] + ADP + H(+). The enzyme catalyses L-threonyl-[protein] + ATP = O-phospho-L-threonyl-[protein] + ADP + H(+). Its function is as follows. Required for oocyte nuclear envelope breakdown before entry of oocyte into spermatheca. In meiotic cells, required for spindle dynamics and probably for spindle attachment to the chromosomes. Zygotic role in the development of the germline and nerve cord. In mitotic cells, plays a role in spindle organization and centrosome maturation. Involved in asymmetric nuclear localization of cdc-25.1 during embryogenesis which affects cell division timing. Together with plk-2, regulates cytoplasm polarity in early embryos. May play a minor role in chromosome pairing and synapsis during oocyte meiosis I. This chain is Serine/threonine-protein kinase plk-1 (plk-1), found in Caenorhabditis elegans.